We begin with the raw amino-acid sequence, 190 residues long: dTTP/UTP pyrophosphatase (190 aa).

The active-site Proton acceptor is the aspartate 71.

This sequence belongs to the Maf family. YhdE subfamily. Requires a divalent metal cation as cofactor.

It is found in the cytoplasm. It catalyses the reaction dTTP + H2O = dTMP + diphosphate + H(+). The enzyme catalyses UTP + H2O = UMP + diphosphate + H(+). Nucleoside triphosphate pyrophosphatase that hydrolyzes dTTP and UTP. May have a dual role in cell division arrest and in preventing the incorporation of modified nucleotides into cellular nucleic acids. The polypeptide is dTTP/UTP pyrophosphatase (Xanthomonas axonopodis pv. citri (strain 306)).